A 437-amino-acid chain; its full sequence is Probable eukaryotic translation initiation factor 5-2 (437 aa).

Residue 29–36 (GKGNGIKT) participates in GTP binding. 2 stretches are compositionally biased toward basic and acidic residues: residues 148–179 (EQKK…EQRK) and 191–212 (KDSK…HDEN). Disordered stretches follow at residues 148–231 (EQKK…WQTD) and 262–284 (EKKA…PPQE). The residue at position 201 (Ser-201) is a Phosphoserine; by CK2. Residues 213-226 (ALEVDEDEDDDDGV) show a composition bias toward acidic residues. Thr-230 carries the phosphothreonine; by CK2 modification. One can recognise a W2 domain in the interval 278-436 (ENPPPQEKNL…QSAESESEEE (159 aa)). Ser-428, Ser-431, and Ser-433 each carry phosphoserine; by CK2.

Belongs to the eIF-2-beta/eIF-5 family. In terms of processing, phosphorylated at Ser-201, Thr-230, Ser-428, Ser-431, and Ser-433 by CK2.

Its function is as follows. Catalyzes the hydrolysis of GTP bound to the 40S ribosomal initiation complex (40S.mRNA.Met-tRNA[F].eIF-2.GTP) with the subsequent joining of a 60S ribosomal subunit resulting in the release of eIF-2 and the guanine nucleotide. The subsequent joining of a 60S ribosomal subunit results in the formation of a functional 80S initiation complex (80S.mRNA.Met-tRNA[F]). The chain is Probable eukaryotic translation initiation factor 5-2 from Arabidopsis thaliana (Mouse-ear cress).